The chain runs to 418 residues: UDP-N-acetyl-D-mannosamine dehydrogenase (418 aa).

Tyr10, Ile11, Asp30, Thr85, and Thr119 together coordinate NAD(+). Residues Arg152, Val153, Lys204, Asn208, Arg211, His242, Arg244, Thr249, and Gly255 each contribute to the UDP-N-acetyl-alpha-D-mannosaminouronate site. Lys204 (proton donor/acceptor) is an active-site residue. Cys258 acts as the Nucleophile in catalysis. An NAD(+)-binding site is contributed by Lys261. UDP-N-acetyl-alpha-D-mannosaminouronate-binding residues include Tyr318 and Lys319. NAD(+) is bound at residue Arg326. Arg398 contacts UDP-N-acetyl-alpha-D-mannosaminouronate.

The protein belongs to the UDP-glucose/GDP-mannose dehydrogenase family. As to quaternary structure, homodimer.

It carries out the reaction UDP-N-acetyl-alpha-D-mannosamine + 2 NAD(+) + H2O = UDP-N-acetyl-alpha-D-mannosaminouronate + 2 NADH + 3 H(+). Catalyzes the four-electron oxidation of UDP-N-acetyl-D-mannosamine (UDP-ManNAc), reducing NAD(+) and releasing UDP-N-acetylmannosaminuronic acid (UDP-ManNAcA). This is UDP-N-acetyl-D-mannosamine dehydrogenase from Pyrococcus horikoshii (strain ATCC 700860 / DSM 12428 / JCM 9974 / NBRC 100139 / OT-3).